A 499-amino-acid polypeptide reads, in one-letter code: Pyruvate kinase (499 aa).

Arginine 50 contributes to the substrate binding site. Asparagine 52, serine 54, aspartate 84, and threonine 85 together coordinate K(+). Residue 52 to 55 coordinates ATP; the sequence is NFSH. Residue arginine 91 participates in ATP binding. Glutamate 241 provides a ligand contact to Mg(2+). Substrate-binding residues include glycine 264, aspartate 265, and threonine 297. Aspartate 265 lines the Mg(2+) pocket.

Belongs to the pyruvate kinase family. In terms of assembly, homotetramer. It depends on Mg(2+) as a cofactor. The cofactor is K(+).

It carries out the reaction pyruvate + ATP = phosphoenolpyruvate + ADP + H(+). It participates in carbohydrate degradation; glycolysis; pyruvate from D-glyceraldehyde 3-phosphate: step 5/5. With respect to regulation, activated by fructose 2,6-bisphosphate, activated by the effector in a non cooperative manner. In Leishmania mexicana, this protein is Pyruvate kinase (PYK).